The sequence spans 284 residues: uncharacterized protein (284 aa).

This sequence belongs to the IIV-6 436R family.

This is an uncharacterized protein from Invertebrate iridescent virus 3 (IIV-3).